The sequence spans 423 residues: Hemoglobinase (423 aa).

The signal sequence occupies residues 1 to 18 (MFYSIFFIHILRIVLVDC). A propeptide spanning residues 19–29 (NEYSEENVDDR) is cleaved from the precursor. Catalysis depends on residues histidine 145 and cysteine 186. A disordered region spans residues 286–307 (RKKASTEHDEPPMKPKDSIPSR). Positions 286 to 423 (RKKASTEHDE…INGVIRKVCG (138 aa)) are excised as a propeptide. The span at 289-305 (ASTEHDEPPMKPKDSIP) shows a compositional bias: basic and acidic residues.

It belongs to the peptidase C13 family. As to expression, gut.

It carries out the reaction Hydrolysis of proteins and small molecule substrates at -Asn-|-Xaa- bonds.. Functionally, this protease is used by the parasite for degradation of the host globin. This is Hemoglobinase (HAEM) from Schistosoma japonicum (Blood fluke).